Consider the following 614-residue polypeptide: Zinc metalloproteinase-disintegrin-like protein H4 subunit A (614 aa).

The first 20 residues, 1-20 (MIQPLLVVTCLVVFPYQVSS), serve as a signal peptide directing secretion. The propeptide occupies 21–193 (IILESGNVND…RKASQLVATS (173 aa)). Position 194 is a pyrrolidone carboxylic acid (Glu) (E194). The 197-residue stretch at 201-397 (KYIELVIVVD…IKSKCIDNKP (197 aa)) folds into the Peptidase M12B domain. N220 carries N-linked (GlcNAc...) asparagine glycosylation. Disulfide bonds link C312/C392, C352/C376, C354/C359, C408/C437, C419/C432, C421/C427, C431/C454, C445/C451, C450/C476, C463/C483, C470/C502, C495/C507, C514/C564, C529/C575, C542/C552, C559/C601, and C595/C607. H337 serves as a coordination point for Zn(2+). Residues 337 to 348 (HELGHNLGMDHD) carry the Metal-binding motif. The active-site Proton acceptor is the E338. Zn(2+) is bound by residues H341 and H347. The 87-residue stretch at 405–491 (PAFCGNYFVE…ECPTDVLQRN (87 aa)) folds into the Disintegrin domain. Positions 410, 412, 414, 417, and 420 each coordinate Ca(2+). The N-linked (GlcNAc...) asparagine glycan is linked to N433. The short motif at 469-471 (ECD) is the D/ECD-tripeptide element. Ca(2+) contacts are provided by D471 and D486.

It belongs to the venom metalloproteinase (M12B) family. P-III subfamily. As to quaternary structure, homodimer; disulfide-linked. Heterodimer of A and B subunits; disulfide-linked. Zn(2+) serves as cofactor. N-glycosylated. In terms of processing, the N-terminus is blocked. In terms of tissue distribution, expressed by the venom gland (at protein level). Expressed by the venom gland.

It localises to the secreted. Its activity is regulated as follows. The proteolytic activity of the heterodimer of A and B subunits requires Zn(2+) and Ca(2+) ions. Heterodimer (A and B subunits): Zinc metalloprotease that has fibrinogenolytic and hemorrhagic activities. Cleaves insulin B chain preferably at '40-Tyr-|-Leu-41' bond, but also at '28-Gln-|-His-29' and '34-His-|-Leu-35' bonds. Hydrolyzes effectively isolated extracellular matrix (ECM) bovine fibronectin, and only slightly, basal membrane (BM) proteins human collagen IV and murine laminin, in vitro. Cleaves nidogen-1 (at '350-Ser-|-Phe-351' and '380-Tyr-|-Asn-381' bonds), but not laminin, in a solubilized BM preparation. Hydrolyzes plasma proteins involved in blood coagulation in vitro. It slightly shortens prothrombin time and significantly prolongs thrombin time. Has potent alpha-fibrinogenase activity cleaving human fibrinogen alpha chain at '441-Glu-|-Leu-442' and '539-Glu-|-Phe-540' bonds, and to a lesser extent, beta chain at '52-Lys-|-Arg-53' and '48-Pro-|-Leu-49' bonds, but does not cleave gamma chain. Hydrolyzes bovine prothrombin at '200-Ser-|-Gly-201' bond, but does not activate it, however, it cleaves fragment 1 and prethrombin 1 from it. Hydrolyzes bovine factor X heavy chain, but the cleavage does not produce an activated factor Xa heavy chain. No hydrolysis or activation of plasminogen. The ability to degrade some of the ECM, BM and plasma proteins is likely the main contributor to its hemorrhagic activity. Inhibits platelet aggregation induced by collagen in vitro. Its binding to glycosaminoglycans (GAGs) may assist in concentrating it in the proximity of blood vessel walls enabling in vivo degradation of BM protein components. Cytotoxic to cultured HeLa cancer cells in a concentration- and time-dependent manner. In the solubilized BM preparation (Matrigel), it induces morphological changes in the HeLa cells and inhibits their adhesion, however, the viability of the cells is not reduced. This Vipera ammodytes ammodytes (Western sand viper) protein is Zinc metalloproteinase-disintegrin-like protein H4 subunit A.